The following is a 1388-amino-acid chain: MKRGFARPTPEKAPVIKPENIVLPTPLSIPPPEGKPWWLIVVGVVVVGLLGGMVAMVFASGSHVFGGVGSIFPIFMMVGIMMMMFRSVGAGGQQQMSRPKLDAMRAQFMLMLDMLRETAQESADSMDSNYRWFHPAPSTLAAAVGSPRMWERKPDGKDLNFGVVRVGVGMTRPEVTWGEPQNMPTDIELEPVTGKALQEFGRYQSVVYNLPKMISLLVEPWYALVGEREQALGLMRAIICQLTFSHGPDHVQFIVVSSDLAEWEWVKWLPHFGDSRRYDAAGNARMVYSSVREFAAEQGELFAGRGSFTPRHASSSAQTPTPHTVIICDVDDPQWEYVISAEGVDGVTFFDLTGSPMWTNVPERKLEFDKTGVIEALPRDRDTWMVIDDNAWFFALTDHVSIAEAEEFGQKLAQWRLAEAYEEIGQRVAHIGARDILAYYGIDDPGNIDFDYLWGSRTDSMGRSRLRAPFGNRSDNGELLFLDMKSLDEGGDGPHGVMSGTTGSGKSTLVRTVIESLMLGHPPEELQFVLADLKGGSAVKPFAGVPHVSRIITDLEEDQALMERFLDALWGEIARRKAICDSAGVDDAKEYNSVRGRMRARGQDMAPLPMLVVVIDEFYEWFRIMPTAVDVLDSIGRQGRAYWIHLMMASQTIESRAEKLMENMGYRLVLKARTAGAAQAAGVPNAVNLPAQAGLGYFRKSLEDIIRFQAEFLWRDYFQPGITVDGEEAPVLVHSIDYIRPQLFTNSFTPLEVTVGGPEIDKVVAHANGEVVEEVEAEAEEEGIRVPKVGTVIIDQLRRINFEPYRLWQPPLTQPVAIDDLVNRFLGHPWQKEYGSARNLVFPIGVIDRPFKHDQPPWTVDTSGPGSNVLILGAGGSGKTTALQTLISSAALTHTPDQVQFYCLAYSSTALTTVSKLPHVGEVAGPTDPYGVRRTVAELLALVRERKRSFLEYGIASMEMFRRRKFGGEAGPVPNDGFGDVYLVIDNYRALAEENEVLIEQVNLIINQGPSFGVHVVVTADRESELRPPVRSGFGSRVELRLAAVEDAKLVRSRFAKDVPVKPGRGMVAVNYVRLDSDPQAGLHTLVARPAMGSTPTNVFECDSVVAAVSRLTTSQAPPVRRLPASFGVDQVRQLAARDTRQGVGVGGIAWAISELDLQPVYLNFAENSHLMVTGRRECGRTTTLATIMSEIGRLYAPGATSVPAPPPGQPSAQVWLIDPRRQLLTALGSNYVERFAYNLDGVQAMMGELAAVLAGREPPPGLSAEELLSRSWWSGPEIFLIVDDIQQLPPGFDSPLHKAAPWVNRAADVGLHVIVTRSFGGWSSAGSDPMLRALHQANAPLLVMDADPDEGFIRGKMKGGPLPRGRGLLMAEDTGVFVQVALTEVRK.

The next 2 helical transmembrane spans lie at 38–58 (WLIVVGVVVVGLLGGMVAMVF) and 65–85 (FGGVGSIFPIFMMVGIMMMMF). 3 FtsK domains span residues 477-679 (GELL…GAAQ), 855-1049 (QPPW…EDAK), and 1158-1351 (LQPV…DPDE). Residues 500–507 (GTTGSGKS), 873–880 (GAGGSGKT), and 1175–1182 (GRRECGRT) each bind ATP.

Part of the ESX-5 / type VII secretion system (T7SS), which is composed of cytosolic and membrane components. The ESX-5 membrane complex is composed of EccB5, EccC5, EccD5 and EccE5.

Its subcellular location is the cell inner membrane. Its function is as follows. Part of the ESX-5 specialized secretion system, which is responsible for the secretion of EsxN and a number of PE_PGRS and PPE proteins. This component is essential for ESX-5 complex stability and secretion. The sequence is that of ESX-5 secretion system protein EccC5 from Mycobacterium marinum (strain ATCC BAA-535 / M).